Here is a 405-residue protein sequence, read N- to C-terminus: Terpene cyclase pbrA (405 aa).

The Mg(2+) site is built by Asp-103, Glu-168, Asn-229, Ser-233, Glu-237, and Asp-241. A D(D/E)XX(D/E) motif motif is present at residues 103–108 (DDEISS). The NSE motif motif lies at 227–237 (LVNDLFSFYKE). A WxxxxxRY motif motif is present at residues 316–323 (EDLGGSSA).

Belongs to the trichodiene synthase family. The cofactor is Mg(2+).

The protein operates within secondary metabolite biosynthesis; terpenoid biosynthesis. Its function is as follows. Terpene cyclase; part of the gene cluster that mediates the biosynthesis of the sesquiterpenoid aspterric acid (AA), an inhibitor of dihydroxy-acid dehydratase (DHAD) effective as an herbicide. PbrA cyclizes farnesyl diphosphate (FPP) to produce (-)-daucane. The cytochrome P450 monooxygenase pbrBB then converts (-)-daucane into the alpha-epoxy carboxylate intermediate which is further converted into the tricyclic aspterric acid by the cytochrome P450 monooxygenase pbrC. The protein is Terpene cyclase pbrA of Penicillium brasilianum.